Here is a 507-residue protein sequence, read N- to C-terminus: (6-4) photolyase (507 aa).

6,7-dimethyl-8-(1-D-ribityl)lumazine is bound by residues 9–10 (GD), 32–40 (CEVMAEASY), and Gly105. FAD is bound by residues 265-269 (HSLLS) and Asn273. Cys350 contributes to the [4Fe-4S] cluster binding site. FAD is bound by residues 363–366 (YAHH), Asp397, and Asn406. Cys438, Cys441, and Cys454 together coordinate [4Fe-4S] cluster.

Belongs to the iron-sulfur bacterial cryptochrome/photolyase (FeS-BCP) family. FAD serves as cofactor. 6,7-dimethyl-8-(1-D-ribityl)lumazine is required as a cofactor. Requires [4Fe-4S] cluster as cofactor.

The catalysed reaction is (6-4) photoproduct (in DNA) = 2 pyrimidine residues (in DNA).. Photolyase involved in the repair of UV-induced (6-4) lesions in DNA. Catalyzes the photoreactivation of (6-4) pyrimidine-pyrimidone photoproducts by using blue-light energy. Can repair (6-4) photoproducts in ssDNA as well as in dsDNA. This is (6-4) photolyase from Agrobacterium fabrum (strain C58 / ATCC 33970) (Agrobacterium tumefaciens (strain C58)).